The chain runs to 602 residues: Non structural protein VP9' (602 aa).

The protein resides in the host cytoplasm. The sequence is that of Non structural protein VP9' from Callospermophilus lateralis (Golden-mantled ground squirrel).